Here is a 496-residue protein sequence, read N- to C-terminus: Glycerol kinase (496 aa).

Thr-11 serves as a coordination point for ADP. Positions 11, 12, and 13 each coordinate ATP. Thr-11 lines the sn-glycerol 3-phosphate pocket. Residue Arg-15 coordinates ADP. Residues Arg-81, Glu-82, Tyr-133, and Asp-242 each contribute to the sn-glycerol 3-phosphate site. 5 residues coordinate glycerol: Arg-81, Glu-82, Tyr-133, Asp-242, and Gln-243. The ADP site is built by Thr-264 and Gly-307. Residues Thr-264, Gly-307, and Gln-311 each contribute to the ATP site. Asn-413 is an ADP binding site.

Belongs to the FGGY kinase family.

The catalysed reaction is glycerol + ATP = sn-glycerol 3-phosphate + ADP + H(+). The protein operates within polyol metabolism; glycerol degradation via glycerol kinase pathway; sn-glycerol 3-phosphate from glycerol: step 1/1. Its activity is regulated as follows. Inhibited by fructose 1,6-bisphosphate (FBP). Functionally, key enzyme in the regulation of glycerol uptake and metabolism. Catalyzes the phosphorylation of glycerol to yield sn-glycerol 3-phosphate. This Borrelia duttonii (strain Ly) protein is Glycerol kinase.